Here is a 190-residue protein sequence, read N- to C-terminus: RNA-binding protein OPG065 (190 aa).

The 66-residue stretch at 5-70 (YIDERSDAEI…DIPPRWFMTT (66 aa)) folds into the Z-binding domain. The region spanning 117–184 (NPVTIINEYC…AKLAVDKLLG (68 aa)) is the DRBM domain.

Belongs to the orthopoxvirus OPG065 family. In terms of assembly, interacts with host G1P2/ISG15. Interacts with host EIF2AK2/PKR. Interacts with host ZBP1.

Functionally, RNA-binding protein that plays a role in the inhibition of multiple cellular antiviral responses activated by double-stranded RNA (dsRNA), such as inhibition of PKR activation, necroptosis, and IFN-mediated antiviral activities. Recognizes and binds Z-RNA structures via its Z-binding domain and dsRNA via its DRBM domain: RNA-binding activity is required to escape host ZBP1-dependent necroptosis. Mechanistically, the Z-binding domain binds Z-RNAs that are produced during vaccinia virus infection, thereby competing with Z-RNA detection by host ZBP1, suppressing ZBP1-dependent necroptosis. Acts as a key inhibitor of the interferon response by blocking the phosphorylation and subsequent activation of IRF3 and IRF7 kinases that are required for interferon-alpha gene expression. Inhibits NF-kappa-B activation and the ubiquitin-like protein ISG15, which is an early antiviral protein. The binding with host ISG15 subsequently blocks host ISGylation. This chain is RNA-binding protein OPG065 (OPG065), found in Homo sapiens (Human).